Here is a 670-residue protein sequence, read N- to C-terminus: E3 ubiquitin-protein ligase MAG2 (670 aa).

2 disordered regions span residues 1–84 and 124–145; these read MVEP…TSTR and EVER…RDEH. Positions 20-39 are enriched in polar residues; it reads DTLNATSNSSKQGVSNNKRN. A compositionally biased stretch (basic and acidic residues) spans 51-66; the sequence is SDGRDNAHNYHGEGRR. The segment at 195 to 250 adopts an RING-type zinc-finger fold; that stretch reads CSICLSEEPVAPRMVTCGHIFCLSCLLNFFSIEETVKNKETGYSKKKKYKECPLCG. The segment at 609-670 is disordered; it reads TEDEKASKEN…LFSSNHQALG (62 aa). The span at 610–622 shows a compositional bias: basic and acidic residues; sequence EDEKASKENKEFQ. Low complexity predominate over residues 637–649; it reads VTDSTDSPPTSNG.

This sequence belongs to the RNF10 family.

Its subcellular location is the cytoplasm. It catalyses the reaction S-ubiquitinyl-[E2 ubiquitin-conjugating enzyme]-L-cysteine + [acceptor protein]-L-lysine = [E2 ubiquitin-conjugating enzyme]-L-cysteine + N(6)-ubiquitinyl-[acceptor protein]-L-lysine.. It functions in the pathway protein modification; protein ubiquitination. Functionally, E3 ubiquitin-protein ligase involved in the degradation of non-functional 18S rRNAs in response to stalled ribosomes. Catalyzes monoubiquitination of RPS3/uS3 in response to stalled ribosomes, initiating a HEL2-dependent response that activates the degradation of non-functional 18S rRNAs. This is E3 ubiquitin-protein ligase MAG2 from Saccharomyces cerevisiae (strain ATCC 204508 / S288c) (Baker's yeast).